The following is a 525-amino-acid chain: Zinc finger protein 678 (525 aa).

14 consecutive C2H2-type zinc fingers follow at residues 97 to 119 (FQCIECGRNFSWRSILTEHKRIH), 125 to 147 (YKCEECGKVFNRCSNLTKHKRIH), 153 to 175 (YKCDECGKVFNWWSQLTNHKKIH), 181 to 203 (YKCDECDKVFNWWSQLTSHKKIH), 209 to 231 (YPCEECGKAFTQFSNLTQHKRIH), 237 to 259 (YKCKECCKAFNKFSNLTQHKRIH), 265 to 287 (YKCEECGNVFNECSHLTRHRRIH), 293 to 315 (YKCEECGKAFTQFASLTRHKRIH), 321 to 343 (YQCEECGKTFNRCSHLSSHKRIH), 349 to 371 (YKCEECGRTFTQFSNLTQHKRIH), 377 to 399 (YKCKECGKAFNKFSSLTQHRRIH), 405 to 427 (YKCEECGKVFKQCSHLTSHKRIH), 433 to 455 (YKCKECGKAFYQSSILSKHKRIH), and 461 to 483 (YKCEECGKAFNQFSSLTRHKRIH). The C2H2-type 15; degenerate zinc-finger motif lies at 489–511 (YKCKECGKGFYQSSIHSKYKRIY).

Belongs to the krueppel C2H2-type zinc-finger protein family.

The protein resides in the nucleus. Functionally, may be involved in transcriptional regulation. In Homo sapiens (Human), this protein is Zinc finger protein 678 (ZNF678).